A 108-amino-acid polypeptide reads, in one-letter code: Replication restart protein PriB (108 aa).

The 98-residue stretch at 11-108 folds into the SSB domain; sequence INRNQVIISG…VLHVRDTRII (98 aa).

Belongs to the PriB family. Homodimer. Interacts with PriA and DnaT. Component of the replication restart primosome. Primosome assembly occurs via a 'hand-off' mechanism. PriA binds to replication forks, subsequently PriB then DnaT bind; DnaT then displaces ssDNA to generate the helicase loading substrate.

In terms of biological role, involved in the restart of stalled replication forks, which reloads the replicative helicase on sites other than the origin of replication; the PriA-PriB pathway is the major replication restart pathway. During primosome assembly it facilitates complex formation between PriA and DnaT on DNA; stabilizes PriA on DNA. Stimulates the DNA unwinding activity of PriA helicase. The protein is Replication restart protein PriB of Nitrosomonas europaea (strain ATCC 19718 / CIP 103999 / KCTC 2705 / NBRC 14298).